A 461-amino-acid polypeptide reads, in one-letter code: Bifunctional protein GlmU (461 aa).

A pyrophosphorylase region spans residues 1–236 (MNVLLQELFI…VFEIFGINNR (236 aa)). UDP-N-acetyl-alpha-D-glucosamine-binding positions include lysine 27, glutamine 80, 85–86 (GT), 109–111 (YGD), glycine 146, glutamate 160, asparagine 175, and asparagine 234. A Mg(2+)-binding site is contributed by aspartate 111. Mg(2+) is bound at residue asparagine 234. The tract at residues 237–257 (FQLMKLEKIYQIEQAKKLLLN) is linker. The N-acetyltransferase stretch occupies residues 258 to 461 (GVTLSDYNRF…SILRKENNSK (204 aa)). Lysine 358 provides a ligand contact to UDP-N-acetyl-alpha-D-glucosamine. Histidine 370 functions as the Proton acceptor in the catalytic mechanism. UDP-N-acetyl-alpha-D-glucosamine contacts are provided by tyrosine 373 and asparagine 384. Residues alanine 387, alanine 430, and arginine 447 each contribute to the acetyl-CoA site.

This sequence in the N-terminal section; belongs to the N-acetylglucosamine-1-phosphate uridyltransferase family. It in the C-terminal section; belongs to the transferase hexapeptide repeat family. Homotrimer. Requires Mg(2+) as cofactor.

The protein resides in the cytoplasm. It catalyses the reaction alpha-D-glucosamine 1-phosphate + acetyl-CoA = N-acetyl-alpha-D-glucosamine 1-phosphate + CoA + H(+). The catalysed reaction is N-acetyl-alpha-D-glucosamine 1-phosphate + UTP + H(+) = UDP-N-acetyl-alpha-D-glucosamine + diphosphate. Its pathway is nucleotide-sugar biosynthesis; UDP-N-acetyl-alpha-D-glucosamine biosynthesis; N-acetyl-alpha-D-glucosamine 1-phosphate from alpha-D-glucosamine 6-phosphate (route II): step 2/2. The protein operates within nucleotide-sugar biosynthesis; UDP-N-acetyl-alpha-D-glucosamine biosynthesis; UDP-N-acetyl-alpha-D-glucosamine from N-acetyl-alpha-D-glucosamine 1-phosphate: step 1/1. It participates in bacterial outer membrane biogenesis; LPS lipid A biosynthesis. Catalyzes the last two sequential reactions in the de novo biosynthetic pathway for UDP-N-acetylglucosamine (UDP-GlcNAc). The C-terminal domain catalyzes the transfer of acetyl group from acetyl coenzyme A to glucosamine-1-phosphate (GlcN-1-P) to produce N-acetylglucosamine-1-phosphate (GlcNAc-1-P), which is converted into UDP-GlcNAc by the transfer of uridine 5-monophosphate (from uridine 5-triphosphate), a reaction catalyzed by the N-terminal domain. The protein is Bifunctional protein GlmU of Wigglesworthia glossinidia brevipalpis.